The chain runs to 492 residues: N-succinylglutamate 5-semialdehyde dehydrogenase (492 aa).

220–225 (GSASTG) lines the NAD(+) pocket. Active-site residues include Glu243 and Cys277.

This sequence belongs to the aldehyde dehydrogenase family. AstD subfamily.

It carries out the reaction N-succinyl-L-glutamate 5-semialdehyde + NAD(+) + H2O = N-succinyl-L-glutamate + NADH + 2 H(+). It participates in amino-acid degradation; L-arginine degradation via AST pathway; L-glutamate and succinate from L-arginine: step 4/5. Its function is as follows. Catalyzes the NAD-dependent reduction of succinylglutamate semialdehyde into succinylglutamate. This is N-succinylglutamate 5-semialdehyde dehydrogenase from Salmonella agona (strain SL483).